The chain runs to 261 residues: Undecaprenyl-diphosphatase (261 aa).

The next 8 membrane-spanning stretches (helical) occupy residues 1 to 21, 41 to 61, 69 to 89, 95 to 115, 129 to 149, 169 to 186, 206 to 226, and 241 to 261; these read MNYIQAIILAIIEGITEFLPV, FTKLFTIVIQLGAILSVVVLY, LDFYFKLLVAFIPAVVLGLLF, ALLESPVTVAVSLLVGGIILL, ITYLKAFKIGLFQCIAMIPGV, AAEFSFFLAVPTMLGATL, ILIIGNIVAFLVALLAIKTFI, and RIVAGIVLLLIHFFIHPLTLI.

This sequence belongs to the UppP family.

It is found in the cell inner membrane. The catalysed reaction is di-trans,octa-cis-undecaprenyl diphosphate + H2O = di-trans,octa-cis-undecaprenyl phosphate + phosphate + H(+). Catalyzes the dephosphorylation of undecaprenyl diphosphate (UPP). Confers resistance to bacitracin. This Flavobacterium psychrophilum (strain ATCC 49511 / DSM 21280 / CIP 103535 / JIP02/86) protein is Undecaprenyl-diphosphatase.